We begin with the raw amino-acid sequence, 364 residues long: Solute carrier family 35 member C2 (364 aa).

The next 2 helical transmembrane spans lie at 14–34 and 42–62; these read AALTLGLVLLYYCFSIGITFY and FHFPLFMTMLHLAVIFLFSAL. Asn102 carries an N-linked (GlcNAc...) asparagine glycan. The next 7 helical transmembrane spans lie at 104-124, 136-156, 166-186, 202-222, 238-258, 272-292, and 295-315; these read SFLYITVSLYTMTKSSAVLFI, LRAALVLVVLLIAGGLFMFTY, FALVLGASFIGGIRWTLTQIL, FHLQPLMFLGLFPLFAIFEGL, LLLWVLGSLLLGGILAFGLGF, LSIAGIFKEVCTLLLAAHLLG, and ISLLNWLGFALCLSGISLHVA. Phosphoserine is present on residues Ser335 and Ser336.

This sequence belongs to the TPT transporter family. SLC35C subfamily.

The protein resides in the golgi apparatus. It is found in the cis-Golgi network membrane. Its subcellular location is the endoplasmic reticulum-Golgi intermediate compartment membrane. In terms of biological role, may play an important role in the cellular response to tissue hypoxia. May be either a GDP-fucose transporter that competes with SLC35C1 for GDP-fucose, or a factor that otherwise enhances the fucosylation of Notch and is required for optimal Notch signaling in mammalian cells. The protein is Solute carrier family 35 member C2 (Slc35c2) of Mus musculus (Mouse).